The chain runs to 392 residues: Neutrophil cytosol factor 1 (392 aa).

Residues 4-125 (HFIRHIALLG…NFFKVRPDDL (122 aa)) form the PX domain. 2 consecutive SH3 domains span residues 156 to 215 (IILQ…PLDS) and 226 to 285 (YAGE…KAGQ). The tract at residues 290–392 (AKSQIKSRGA…STKRKLASAV (103 aa)) is disordered. Phosphoserine is present on residues serine 304 and serine 305. Positions 310–319 (HSIHQRSRKR) are enriched in basic residues. Residues serine 321, serine 329, and serine 348 each carry the phosphoserine modification. Over residues 376–385 (ILHRCSESTK) the composition is skewed to basic and acidic residues.

As to quaternary structure, component of the phagocyte NADPH oxidase complex composed of an obligatory core heterodimer formed by the membrane proteins CYBA and CYBB and the cytosolic regulatory subunits NCF1/p47-phox, NCF2/p67-phox, NCF4/p40-phox and the small GTPase RAC1 or RAC2. Part of a cytosolic complex composed at least by NCF1, NCF2 and NCF4. Interacts (via C-terminus) with NCF2 (via the C-terminal SH3 domain). Interacts with NCF4. Interacts with CYBB. Interacts (via the second SH3 domain) with CYBA; interaction is phosphorylation-dependent. Interacts with NOXA1. Interacts with ADAM15. Interacts with TRAF4. Interacts with FASLG. Interacts with PARK7 (via C-terminus); the interaction is enhanced by LPS and modulates NCF1 phosphorylation and membrane translocation. In terms of processing, phosphorylated by PRKCD; phosphorylation induces activation of NCF1, leading to assembly and activation of the NADPH oxidase complex.

The protein resides in the cytoplasm. Its subcellular location is the cytosol. It localises to the membrane. Functionally, subunit of the phagocyte NADPH oxidase complex that mediates the transfer of electrons from cytosolic NADPH to O2 to produce the superoxide anion (O2(-)). In the activated complex, electrons are first transferred from NADPH to flavin adenine dinucleotide (FAD) and subsequently transferred via two heme molecules to molecular oxygen, producing superoxide through an outer-sphere reaction. Activation of the NADPH oxidase complex is initiated by the assembly of cytosolic subunits of the NADPH oxidase complex with the core NADPH oxidase complex to form a complex at the plasma membrane or phagosomal membrane. This activation process is initiated by phosphorylation dependent binding of the cytosolic NCF1/p47-phox subunit to the C-terminus of CYBA/p22-phox. This Bos taurus (Bovine) protein is Neutrophil cytosol factor 1.